We begin with the raw amino-acid sequence, 362 residues long: Cytochrome c oxidase subunit 2 (362 aa).

The N-terminal stretch at 1–28 (MEQQEKRGTVRKALLGSVIGFGGLALAG) is a signal peptide. Residue cysteine 29 is the site of N-palmitoyl cysteine attachment. Residue cysteine 29 is the site of S-diacylglycerol cysteine attachment. A run of 2 helical transmembrane segments spans residues 60-80 (FWVWVWVTAWIIGFIMWGLFI) and 107-127 (IPLELVLTIVPIIIVMALFFF). The disordered stretch occupies residues 171–206 (SDYVGTDEKRQEAAEKTKFDQGGDNPNPINGRSKTD). The span at 176–191 (TDEKRQEAAEKTKFDQ) shows a compositional bias: basic and acidic residues. The segment covering 197–206 (NPINGRSKTD) has biased composition (polar residues). Cu cation contacts are provided by histidine 246, cysteine 287, glutamate 289, cysteine 291, histidine 295, and methionine 298. The tract at residues 325 to 362 (NSDALKSIGEAPYATSTHPFNSERATRDGANFDDTAAA) is disordered.

The protein belongs to the cytochrome c oxidase subunit 2 family. In terms of assembly, associates with subunits I, III and IV to form cytochrome c oxidase. Requires binuclear copper center (CuA) as cofactor.

Its subcellular location is the cell membrane. It carries out the reaction 4 Fe(II)-[cytochrome c] + O2 + 8 H(+)(in) = 4 Fe(III)-[cytochrome c] + 2 H2O + 4 H(+)(out). In terms of biological role, subunits I and II form the functional core of the enzyme complex. Electrons originating in cytochrome c are transferred via heme a and Cu(A) to the binuclear center formed by heme a3 and Cu(B). This is Cytochrome c oxidase subunit 2 (ctaC) from Corynebacterium diphtheriae (strain ATCC 700971 / NCTC 13129 / Biotype gravis).